The following is a 334-amino-acid chain: Nucleoid-associated protein VS_0951 (334 aa).

Belongs to the YejK family.

It localises to the cytoplasm. It is found in the nucleoid. The protein is Nucleoid-associated protein VS_0951 of Vibrio atlanticus (strain LGP32) (Vibrio splendidus (strain Mel32)).